The primary structure comprises 99 residues: Large ribosomal subunit protein bL21 (99 aa).

This sequence belongs to the bacterial ribosomal protein bL21 family. As to quaternary structure, part of the 50S ribosomal subunit. Contacts protein L20.

This protein binds to 23S rRNA in the presence of protein L20. The chain is Large ribosomal subunit protein bL21 from Deinococcus geothermalis (strain DSM 11300 / CIP 105573 / AG-3a).